A 387-amino-acid polypeptide reads, in one-letter code: F-box only protein 4 (387 aa).

Residues Ser-12 and Ser-48 each carry the phosphoserine modification. The region spanning 56–102 (ASTLTRLPIDVQLYILSFLSPHDLCQLGSTNHYWNETVRDPILWRYF) is the F-box domain.

In terms of assembly, homodimer. Part of the SCF (SKP1-CUL1-F-box) E3 ubiquitin-protein ligase complex SCF(FBXO4) formed of CUL1, SKP1, RBX1 and FBXO4. Interacts with TERF1; this interaction is prevented in the presence of GNL3L. Identified in a complex with CRYAB and CCND1. Post-translationally, phosphorylation at Ser-12 varies during the cell cycle. It is low in resting cells and high in the S phase and the G2/M phase of the cell cycle. Phosphorylation is decreased during late G1 phase. Phosphorylation at Ser-12 promotes homodimerization and is necessary for optimal ubiquitin ligase activity towards CCND1.

The protein resides in the cytoplasm. Its pathway is protein modification; protein ubiquitination. Its function is as follows. Substrate recognition component of a SCF (SKP1-CUL1-F-box protein) E3 ubiquitin-protein ligase complex that mediates the ubiquitination and subsequent proteasomal degradation of target proteins. Promotes ubiquitination of cyclin-D1 (CCND1) and its subsequent proteasomal degradation. However, it does not act as a major regulator of CCND1 stability during the G1/S transition. Recognizes TERF1 and promotes its ubiquitination together with UBE2D1. Promotes ubiquitination of FXR1 following phosphorylation of FXR1 by GSK3B, leading to FXR1 degradation by the proteasome. This is F-box only protein 4 (FBXO4) from Homo sapiens (Human).